The primary structure comprises 61 residues: Small ribosomal subunit protein uS14 (61 aa).

Cys24, Cys27, Cys40, and Cys43 together coordinate Zn(2+).

The protein belongs to the universal ribosomal protein uS14 family. Zinc-binding uS14 subfamily. Part of the 30S ribosomal subunit. Contacts proteins S3 and S10. The cofactor is Zn(2+).

Its function is as follows. Binds 16S rRNA, required for the assembly of 30S particles and may also be responsible for determining the conformation of the 16S rRNA at the A site. In Nitratidesulfovibrio vulgaris (strain DSM 19637 / Miyazaki F) (Desulfovibrio vulgaris), this protein is Small ribosomal subunit protein uS14.